Reading from the N-terminus, the 230-residue chain is Heptaprenylglyceryl phosphate synthase (230 aa).

Lysine 12 lines the sn-glycerol 1-phosphate pocket. Mg(2+)-binding residues include aspartate 14 and threonine 40. Sn-glycerol 1-phosphate contacts are provided by residues 159 to 164 (YIEYSG), glycine 189, and 209 to 210 (GD).

The protein belongs to the GGGP/HepGP synthase family. Group I subfamily. As to quaternary structure, homodimer. Requires Mg(2+) as cofactor.

The enzyme catalyses sn-glycerol 1-phosphate + all-trans-heptaprenyl diphosphate = 3-heptaprenyl-sn-glycero-1-phosphate + diphosphate. It participates in membrane lipid metabolism; glycerophospholipid metabolism. Functionally, prenyltransferase that catalyzes in vivo the transfer of the heptaprenyl moiety of heptaprenyl pyrophosphate (HepPP; 35 carbon atoms) to the C3 hydroxyl of sn-glycerol-1-phosphate (G1P), producing heptaprenylglyceryl phosphate (HepGP). This reaction is an ether-bond-formation step in the biosynthesis of archaea-type G1P-based membrane lipids found in Bacillales. To a much lesser extent, is also able to use geranylgeranyl diphosphate (GGPP; C20) as the prenyl donor. The sequence is that of Heptaprenylglyceryl phosphate synthase from Staphylococcus aureus (strain NCTC 8325 / PS 47).